A 362-amino-acid polypeptide reads, in one-letter code: MEQQEKRGTVRKALLGSVIGFGGLALAGCDVEAPGGPLGTALGFGWPKGITPEATSMYNFWVWVWVTAWIIGFIMWGLFIYGMFSWSAKRAKKAGKDEFPRQTQYNIPLELVLTIVPIIIVMALFFFTVQTQDKVTAMDKDPKVTVDVTGYQWNWKFGYAKVAGELSPTGSDYVGTDEKRQEAAEKTKFDQGGDNPNPINGRSKTDTSYLHFNKIETLGTSEEIPVLVLPSNTPVEFDLASADVSHAFWVPEFLFKRDAYNHPEQNKQQRRFQIEKIEKEGAFVGRCAEMCGTYHAMMNFEIRVVSPEKFAQYLKFRNDNPQATNSDALKSIGEAPYATSTHPFNSERATRDGANFDDTAAA.

An N-terminal signal peptide occupies residues 1–28; that stretch reads MEQQEKRGTVRKALLGSVIGFGGLALAG. A lipid anchor (N-palmitoyl cysteine) is attached at C29. C29 is lipidated: S-diacylglycerol cysteine. 2 consecutive transmembrane segments (helical) span residues 60–80 and 107–127; these read FWVW…GLFI and IPLE…LFFF. The disordered stretch occupies residues 171–206; that stretch reads SDYVGTDEKRQEAAEKTKFDQGGDNPNPINGRSKTD. Over residues 176-191 the composition is skewed to basic and acidic residues; it reads TDEKRQEAAEKTKFDQ. Polar residues predominate over residues 197-206; sequence NPINGRSKTD. The Cu cation site is built by H246, C287, E289, C291, H295, and M298. The tract at residues 325 to 362 is disordered; it reads NSDALKSIGEAPYATSTHPFNSERATRDGANFDDTAAA.

This sequence belongs to the cytochrome c oxidase subunit 2 family. As to quaternary structure, associates with subunits I, III and IV to form cytochrome c oxidase. Binuclear copper center (CuA) is required as a cofactor.

Its subcellular location is the cell membrane. It carries out the reaction 4 Fe(II)-[cytochrome c] + O2 + 8 H(+)(in) = 4 Fe(III)-[cytochrome c] + 2 H2O + 4 H(+)(out). Its function is as follows. Subunits I and II form the functional core of the enzyme complex. Electrons originating in cytochrome c are transferred via heme a and Cu(A) to the binuclear center formed by heme a3 and Cu(B). The chain is Cytochrome c oxidase subunit 2 (ctaC) from Corynebacterium diphtheriae (strain ATCC 700971 / NCTC 13129 / Biotype gravis).